Consider the following 488-residue polypeptide: Cruciferin (488 aa).

Positions 1-23 (MARLSSLLSFSLALLTFLHGSTA) are cleaved as a signal peptide. 2 cysteine pairs are disulfide-bonded: Cys-30-Cys-63 and Cys-105-Cys-305. 2 Cupin type-1 domains span residues 35-262 (LNAL…RTAQ) and 311-460 (DNLD…EEAR). A disordered region spans residues 116–163 (QPSGGSPFGEGQGQGQQGQGQGHQGQGQGQQGQQGQQGQQSQGQGFRD). Residues 121 to 147 (SPFGEGQGQGQQGQGQGHQGQGQGQQG) are compositionally biased toward gly residues. Residues 148-160 (QQGQQGQQSQGQG) are compositionally biased toward low complexity.

The protein belongs to the 11S seed storage protein (globulins) family. As to quaternary structure, hexamer; each subunit is composed of an acidic and a basic chain derived from a single precursor and linked by a disulfide bond.

It localises to the rough endoplasmic reticulum. Functionally, this is a seed storage protein. The polypeptide is Cruciferin (CRUA) (Brassica napus (Rape)).